A 132-amino-acid chain; its full sequence is C-X-C motif chemokine 5 (132 aa).

The signal sequence occupies residues 1 to 40 (MSLQLRSSARIPSGSISPFMRMAPLAFLLLFTLPQHLAEA). Disulfide bonds link Cys-53-Cys-79 and Cys-55-Cys-95.

The protein belongs to the intercrine alpha (chemokine CxC) family. In terms of assembly, monomer. Homodimer. In terms of processing, GCP-2(1-78) and GCP-2(9-78) are produced by proteolytic cleavage after secretion from fibroblasts and epithelial cells. GCP-2(9-78) is the most prominent form. A number of additional N-terminal (processed between pos. 41 and 48) and C-terminal (processed between pos. 118 and 132) processed forms have been identified, probably also representing intermediate states.

It is found in the secreted. In terms of biological role, may participate in the recruitment of inflammatory cells by injured or infected tissue. GCP-2(1-78) and, more potent, GCP-2(9-78) attract neutrophils and are involved in neutrophil activation. The sequence is that of C-X-C motif chemokine 5 (Cxcl5) from Mus musculus (Mouse).